Reading from the N-terminus, the 1894-residue chain is Plexin-A4 (1894 aa).

An N-terminal signal peptide occupies residues 1–23; sequence MKAMPWNWTCLLSHLLMVGMGSS. The Sema domain occupies 24-507; it reads TLLTRQPAPL…SERQLTRVPV (484 aa). Topologically, residues 24–1237 are extracellular; sequence TLLTRQPAPL…IAPDSPLSLP (1214 aa). Disulfide bonds link cysteine 95–cysteine 104, cysteine 130–cysteine 138, cysteine 284–cysteine 405, cysteine 300–cysteine 356, cysteine 374–cysteine 393, cysteine 510–cysteine 527, cysteine 516–cysteine 558, cysteine 519–cysteine 536, cysteine 530–cysteine 542, and cysteine 593–cysteine 612. A PSI 1 domain is found at 509–559; the sequence is SCGQYQSCGECLGSGDPHCGWCVLHNTCTRKERCERSKEPRRFASEMKQCV. N-linked (GlcNAc...) asparagine glycosylation is present at asparagine 655. 2 consecutive PSI domains span residues 655–702 and 803–856; these read NCSV…EDCP and KCGA…SKCT. 4 consecutive IPT/TIG domains span residues 858–952, 954–1037, 1040–1139, and 1142–1230; these read PRIT…YYFM, LTLS…FQYV, PTIV…FTYY, and PVFE…YIAP. N-linked (GlcNAc...) asparagine glycosylation is found at asparagine 1007, asparagine 1132, and asparagine 1180. Residues 1238 to 1258 form a helical membrane-spanning segment; sequence AIVSIAVAGGLLIIFIVAVLI. Topologically, residues 1259 to 1894 are cytoplasmic; sequence AYKRKSRESD…QVITLMSLDS (636 aa). Position 1350 is an N6-acetyllysine (lysine 1350).

The protein belongs to the plexin family. In terms of assembly, interacts with NRP1 and NRP2.

The protein resides in the cell membrane. In terms of biological role, coreceptor for SEMA3A. Necessary for signaling by class 3 semaphorins and subsequent remodeling of the cytoskeleton. Plays a role in axon guidance in the developing nervous system. Class 3 semaphorins bind to a complex composed of a neuropilin and a plexin. The plexin modulates the affinity of the complex for specific semaphorins, and its cytoplasmic domain is required for the activation of down-stream signaling events in the cytoplasm. The protein is Plexin-A4 (PLXNA4) of Homo sapiens (Human).